A 167-amino-acid polypeptide reads, in one-letter code: Ribosome-binding factor A (167 aa).

Residues 127-167 form a disordered region; it reads SRANAQYAGDADPYKHDEPDDDDFDDDDDVEVEDWDDDDEA. A compositionally biased stretch (acidic residues) spans 145–167; the sequence is PDDDDFDDDDDVEVEDWDDDDEA.

Belongs to the RbfA family. Monomer. Binds 30S ribosomal subunits, but not 50S ribosomal subunits or 70S ribosomes.

The protein resides in the cytoplasm. In terms of biological role, one of several proteins that assist in the late maturation steps of the functional core of the 30S ribosomal subunit. Associates with free 30S ribosomal subunits (but not with 30S subunits that are part of 70S ribosomes or polysomes). Required for efficient processing of 16S rRNA. May interact with the 5'-terminal helix region of 16S rRNA. This is Ribosome-binding factor A from Bifidobacterium adolescentis (strain ATCC 15703 / DSM 20083 / NCTC 11814 / E194a).